The chain runs to 330 residues: Alpha-1,6-glucosyltransferase (330 aa).

It belongs to the glycosyltransferase group 1 family. The cofactor is Does not require a metal cofactor..

It is found in the cytoplasm. Its pathway is protein modification; protein glycosylation. Catalyzes the transfer of a glucose moiety from UDP-glucose to another glucose that is N-linked to an asparagine within a peptide or protein. Can act in a repetitive manner, and this way it elongates the N-linked glucose by a glycan chain consisting of several alpha-1-&gt;6 linked glucose residues. Is able to add up to six glucose units in vitro. Cannot use UDP-Gal, UDP-GlcNAc or UDP-GalNAc as a substrate donor. This chain is Alpha-1,6-glucosyltransferase, found in Actinobacillus pleuropneumoniae serotype 7 (strain AP76).